A 262-amino-acid chain; its full sequence is Adenosylcobinamide-GDP ribazoletransferase (262 aa).

8 consecutive transmembrane segments (helical) span residues 4-26 (AWNG…SIAW), 37-57 (CMPL…ALFS), 59-79 (FSFS…IWMA), 112-132 (VGAF…LFLY), 139-159 (IPPA…AWLL), 183-203 (AIWA…STAI), 205-225 (VQTG…AKPW), and 237-257 (VLGA…WLLH).

Belongs to the CobS family. Requires Mg(2+) as cofactor.

Its subcellular location is the cell membrane. It catalyses the reaction alpha-ribazole + adenosylcob(III)inamide-GDP = adenosylcob(III)alamin + GMP + H(+). The catalysed reaction is alpha-ribazole 5'-phosphate + adenosylcob(III)inamide-GDP = adenosylcob(III)alamin 5'-phosphate + GMP + H(+). The protein operates within cofactor biosynthesis; adenosylcobalamin biosynthesis; adenosylcobalamin from cob(II)yrinate a,c-diamide: step 7/7. Functionally, joins adenosylcobinamide-GDP and alpha-ribazole to generate adenosylcobalamin (Ado-cobalamin). Also synthesizes adenosylcobalamin 5'-phosphate from adenosylcobinamide-GDP and alpha-ribazole 5'-phosphate. This Geobacillus kaustophilus (strain HTA426) protein is Adenosylcobinamide-GDP ribazoletransferase.